The following is a 386-amino-acid chain: Putative aminotransferase YugH (386 aa).

An N6-(pyridoxal phosphate)lysine modification is found at K234.

The protein belongs to the class-I pyridoxal-phosphate-dependent aminotransferase family. Pyridoxal 5'-phosphate serves as cofactor.

The protein localises to the cytoplasm. This Bacillus subtilis (strain 168) protein is Putative aminotransferase YugH (yugH).